A 253-amino-acid polypeptide reads, in one-letter code: MSTTNKIYFIAGGNRGIGLSLVKELSNRKGTVVFASARKPGAATKLQEWSKSHSNVHIIKLDVSSLESANEAAQEVTKVVDAVDVLWVNSAVFHSFGPVVNTPDDVWNSHYKTNVLGPIHVYQAFYPLIKKGRSKIIVFTSSLAGSMGAFFPSSQSAYGQSKAALNYTMKEISFELQDEGFIVISIHPGAVRTDSAQEIVNQHAEKKPEILDLFAKQALTPEKSASDMLKVVDNLKPENNGLFYNYDGTIIPF.

The NADP(+) site is built by I17, S36, D62, N89, Y158, K162, V191, and T193. The active-site Proton donor is the Y158. The active-site Lowers pKa of active site Tyr is K162.

It belongs to the short-chain dehydrogenases/reductases (SDR) family.

The protein resides in the cytoplasm. Its subcellular location is the nucleus. This is an uncharacterized protein from Schizosaccharomyces pombe (strain 972 / ATCC 24843) (Fission yeast).